A 450-amino-acid chain; its full sequence is Glucose-6-phosphate isomerase (450 aa).

Phosphothreonine is present on T39. E291 serves as the catalytic Proton donor. Residues H312 and K426 contribute to the active site.

It belongs to the GPI family.

The protein resides in the cytoplasm. It catalyses the reaction alpha-D-glucose 6-phosphate = beta-D-fructose 6-phosphate. It participates in carbohydrate biosynthesis; gluconeogenesis. It functions in the pathway carbohydrate degradation; glycolysis; D-glyceraldehyde 3-phosphate and glycerone phosphate from D-glucose: step 2/4. Its function is as follows. Catalyzes the reversible isomerization of glucose-6-phosphate to fructose-6-phosphate. The polypeptide is Glucose-6-phosphate isomerase (Halalkalibacterium halodurans (strain ATCC BAA-125 / DSM 18197 / FERM 7344 / JCM 9153 / C-125) (Bacillus halodurans)).